A 312-amino-acid chain; its full sequence is Phosphate system positive regulatory protein PHO4 (312 aa).

The interaction with PHO80 stretch occupies residues 1 to 31 (MGRTTSEGIHGFVDDLEPKSSILDKVGDFIT). The interval 35 to 71 (KRHDGREDFNEQNDELNSQENHNSSENGNENENEQDS) is disordered. Residues 49-62 (ELNSQENHNSSENG) show a composition bias toward low complexity. The 9aaTAD motif lies at 75 to 83 (DDLDRAFEL). The tract at residues 75–99 (DDLDRAFELVEGMDMDWMMPSHAHH) is transcription activation domain. 4 positions are modified to phosphoserine; by PHO85: serine 100, serine 114, serine 128, and serine 152. Polar residues-rich tracts occupy residues 138–154 (TTSA…SSPY) and 196–210 (PSNS…TAKT). The interval 138-259 (TTSANKVTKN…DKRESHKHAE (122 aa)) is disordered. Residues 140–166 (SANKVTKNKSNSSPYLNKRRGKPGPDS) carry the Nuclear localization signal motif. Residues 156–200 (NKRRGKPGPDSATSLFELPDSVIPTPKPKPKPKQYPKVILPSNST) form an interaction with PHO80 region. An interaction with PHO2 region spans residues 201 to 218 (RRVSPVTAKTSSSAEGVV). The interval 203-227 (VSPVTAKTSSSAEGVVVASESPVIA) is involved in oligomerization. Serine 204 is modified (phosphoserine). The span at 211-235 (SSSAEGVVVASESPVIAPHGSSHSR) shows a compositional bias: low complexity. Serine 223 carries the post-translational modification Phosphoserine; by PHO85. Phosphoserine occurs at positions 242 and 243. A compositionally biased stretch (basic and acidic residues) spans 248–259 (DDDKRESHKHAE). Positions 250–306 (DKRESHKHAEQARRNRLAVALHELASLIPAEWKQQNVSAAPSKATTVEAACRYIRHL) constitute a bHLH domain.

As to quaternary structure, binds DNA as a homodimer. Interacts with transcription factor PHO2 and binds cooperatively to PHO5 UAS. Interacts with the cyclin-CDK PHO80-PHO85 and the CDK inhibitor (CKI) PHO81. Phosphorylated by the cyclin-CDK PHO80-PHO85 at five residues under high-phosphate conditions, preventing PHO4 from activating the structural PHO genes. Phosphorylation of Ser-114 and Ser-128 promotes nuclear export. Phosphorylation of Ser-152 decreases nuclear import. Phosphorylation of Ser-223 decreases the binding affinity for PHO2.

It localises to the cytoplasm. Its subcellular location is the nucleus. Its function is as follows. Transcriptional activator that regulates the expression of repressible phosphatase under phosphate starvation conditions. Binds to the upstream activating sequence (UAS) of several phosphatase encoding PHO genes. Inhibited by the cyclin-CDK PHO80-PHO85 under high-phosphate conditions. This chain is Phosphate system positive regulatory protein PHO4 (PHO4), found in Saccharomyces cerevisiae (strain ATCC 204508 / S288c) (Baker's yeast).